Reading from the N-terminus, the 654-residue chain is Macrolide export ATP-binding/permease protein MacB (654 aa).

Residues 6–244 enclose the ABC transporter domain; the sequence is IELRGLRREF…RAGDAPTRQP (239 aa). ATP is bound at residue 42–49; sequence GASGSGKS. Transmembrane regions (helical) follow at residues 278 to 298, 527 to 547, 584 to 604, and 619 to 639; these read FLTM…VAVG, LTLM…IGVM, VVCL…AALF, and SIAA…YLPA.

This sequence belongs to the ABC transporter superfamily. Macrolide exporter (TC 3.A.1.122) family. Homodimer.

Its subcellular location is the cell inner membrane. Its function is as follows. Non-canonical ABC transporter that contains transmembrane domains (TMD), which form a pore in the inner membrane, and an ATP-binding domain (NBD), which is responsible for energy generation. Confers resistance against macrolides. This chain is Macrolide export ATP-binding/permease protein MacB, found in Rhodopseudomonas palustris (strain HaA2).